A 229-amino-acid polypeptide reads, in one-letter code: Protein FAM3C (229 aa).

The signal sequence occupies residues M1–S24. 2 cysteine pairs are disulfide-bonded: C59–C87 and C65–C222. The 159-residue stretch at K68–K226 folds into the GG-type lectin domain.

The protein belongs to the FAM3 family. As to expression, expressed in the retinal ganglion cell layer.

The protein resides in the secreted. In terms of biological role, involved in retinal laminar formation. The sequence is that of Protein FAM3C (fam3c) from Xenopus laevis (African clawed frog).